Reading from the N-terminus, the 895-residue chain is Receptor-like protein kinase FERONIA (895 aa).

The first 27 residues, 1–27 (MKITEGRFRLSLLLLLLLISAATLISA), serve as a signal peptide directing secretion. The Extracellular portion of the chain corresponds to 28–447 (ADYSPTEKIL…TTRKSKSNTA (420 aa)). N-linked (GlcNAc...) asparagine glycans are attached at residues asparagine 46, asparagine 124, asparagine 142, asparagine 171, asparagine 219, asparagine 269, asparagine 305, asparagine 330, asparagine 345, and asparagine 410. A helical membrane pass occupies residues 448 to 468 (IIAGAASGAVVLALIIGFCVF). The Cytoplasmic segment spans residues 469–895 (GAYRRRKRGD…FSQIMNPKGR (427 aa)). One can recognise a Protein kinase domain in the interval 536-810 (FDESRVLGVG…GDVLWNLEFA (275 aa)). Residues 542-550 (LGVGGFGKV) and lysine 565 each bind ATP. The Proton acceptor role is filled by aspartate 661. Residues 844-895 (NDKSSDVYEGNVTDSRSSGIDMSIGGRSLASEDSDGLTPSAVFSQIMNPKGR) are disordered. Phosphoserine occurs at positions 858, 866, 871, and 874. The segment covering 884–895 (AVFSQIMNPKGR) has biased composition (polar residues).

Belongs to the protein kinase superfamily. Ser/Thr protein kinase family. In terms of assembly, interacts with ROPGEF1. Interacts with RALF1; triggering phosphorylation status and subsequent activation. Interacts with LRE and LLG1. Interacts, via its extracellular domain, with FERONIA at the synergid cell surface. In terms of processing, autophosphorylated. Phosphorylated at Ser-858, Ser-871 and Ser-874 upon activation by RALF1. Expressed in leaves, buds, flowers, siliques, young ovules primordia, and young anthers with immature pollen, but not detected in mature pollen. Highest expression in the synergid cells of the female gametophyte.

The protein localises to the cell membrane. It catalyses the reaction L-seryl-[protein] + ATP = O-phospho-L-seryl-[protein] + ADP + H(+). It carries out the reaction L-threonyl-[protein] + ATP = O-phospho-L-threonyl-[protein] + ADP + H(+). Receptor-like protein kinase that mediates the female control of male gamete delivery during fertilization, including growth cessation of compatible pollen tubes ensuring a reproductive isolation barriers, by regulating MLO7 subcellular polarization upon pollen tube perception in the female gametophyte synergids. Required for cell elongation during vegetative growth, mostly in a brassinosteroids- (BR-) independent manner. Acts as an upstream regulator for the Rac/Rop-signaling pathway that controls ROS-mediated root hair development. Seems to regulate a cross-talk between brassinosteroids and ethylene signaling pathways during hypocotyl elongation. Negative regulator of brassinosteroid response in light-grown hypocotyls, but required for brassinosteroid response in etiolated seedlings. Mediates sensitivity to powdery mildew (e.g. Golovinomyces orontii). Positive regulator of auxin-promoted growth that represses the abscisic acid (ABA) signaling via the activation of ABI2 phosphatase. Required for RALF1-mediated extracellular alkalinization in a signaling pathway preventing cell expansion. This Arabidopsis thaliana (Mouse-ear cress) protein is Receptor-like protein kinase FERONIA.